A 447-amino-acid polypeptide reads, in one-letter code: Na(+)-translocating NADH-quinone reductase subunit A (447 aa).

The protein belongs to the NqrA family. Composed of six subunits; NqrA, NqrB, NqrC, NqrD, NqrE and NqrF.

The catalysed reaction is a ubiquinone + n Na(+)(in) + NADH + H(+) = a ubiquinol + n Na(+)(out) + NAD(+). Its function is as follows. NQR complex catalyzes the reduction of ubiquinone-1 to ubiquinol by two successive reactions, coupled with the transport of Na(+) ions from the cytoplasm to the periplasm. NqrA to NqrE are probably involved in the second step, the conversion of ubisemiquinone to ubiquinol. This is Na(+)-translocating NADH-quinone reductase subunit A from Neisseria meningitidis serogroup A / serotype 4A (strain DSM 15465 / Z2491).